Here is a 387-residue protein sequence, read N- to C-terminus: Oxidase FUB9 (387 aa).

The disordered stretch occupies residues 1–20; that stretch reads MSRTNLPIQPAKMSDATSSK. Positions 18-379 constitute an FMN hydroxy acid dehydrogenase domain; it reads SSKPQIFSIQ…TPAHLSLLNA (362 aa). Y44 contributes to the a 2-oxocarboxylate binding site. FMN is bound by residues S126, Q150, and T178. R187 serves as a coordination point for a 2-oxocarboxylate. Residue K250 coordinates FMN. The active-site Proton acceptor is H274. R277 serves as a coordination point for a 2-oxocarboxylate. FMN is bound by residues 305–309 and 328–329; these read DGGFR and GR.

Belongs to the FMN-dependent alpha-hydroxy acid dehydrogenase family. FMN serves as cofactor.

Its pathway is mycotoxin biosynthesis. Its function is as follows. Oxidase; part of the gene cluster that mediates the biosynthesis of fusaric acid, a mycotoxin with low to moderate toxicity to animals and humans, but with high phytotoxic properties. L-aspartate is suggested as fusaric acid amino acid precursor that is activated and further processed to O-acetyl-L-homoserine by cluster enzymes aspartate kinase FUB3 and homoserine O-acetyltransferase FUB5, as well as enzymes of the primary metabolism. The polyketide synthase (PKS) FUB1 generates the triketide trans-2-hexenal which is presumptively released by the hydrolase FUB4 and linked to the NRPS-bound amino acid precursor by NAD(P)-dependent dehydrogenase FUB6. FUB1, FUB4, and the non-canonical NRPS Fub8 may form an enzyme complex. Further processing of the NRPS-bound intermediate might be carried out by FUB6 and the sulfhydrylase FUB7, enabling a spontaneous electrocyclization to close the carbon backbone of fusaric acid. Dihydrofusaric acid is likely to be released via reduction by the thioester reductase (TR) domain of FUB8 whereupon the final oxidation to fusaric acid may (also) be performed by the FMN-dependent dehydrogenase FUB9. The sequence is that of Oxidase FUB9 from Gibberella moniliformis (strain M3125 / FGSC 7600) (Maize ear and stalk rot fungus).